The primary structure comprises 425 residues: UPF0761 membrane protein PXO_04555 (425 aa).

Transmembrane regions (helical) follow at residues 48-68 (VFALVPLAIVVFGVLSAFPAF), 105-125 (FTVAGMVALVASLLITLHSIE), 154-174 (GTMLAAASMAMAAYVFALPLF), 182-202 (LAEFAWRLAPMAVEFICIVLI), 219-239 (GALLAVILMEIVKWGFGVYLG), and 250-270 (ALSALPILLLWIYLSWVSVLL).

This sequence belongs to the UPF0761 family.

It is found in the cell inner membrane. This Xanthomonas oryzae pv. oryzae (strain PXO99A) protein is UPF0761 membrane protein PXO_04555.